Here is a 199-residue protein sequence, read N- to C-terminus: Holliday junction branch migration complex subunit RuvA (199 aa).

The domain I stretch occupies residues 1 to 65; it reads MIGWLHGQII…EDALLLYGFL (65 aa). The tract at residues 66–144 is domain II; that stretch reads DKEERSLFRS…QFDGSVSDTF (79 aa). The segment at 144–148 is flexible linker; that stretch reads FQKQA. Residues 149–199 are domain III; that stretch reads GSTHSQQEAISALEALGYKPQEAWKVMNKIDNGNKSCEQLIREALQILSSR.

This sequence belongs to the RuvA family. In terms of assembly, homotetramer. Forms an RuvA(8)-RuvB(12)-Holliday junction (HJ) complex. HJ DNA is sandwiched between 2 RuvA tetramers; dsDNA enters through RuvA and exits via RuvB. An RuvB hexamer assembles on each DNA strand where it exits the tetramer. Each RuvB hexamer is contacted by two RuvA subunits (via domain III) on 2 adjacent RuvB subunits; this complex drives branch migration. In the full resolvosome a probable DNA-RuvA(4)-RuvB(12)-RuvC(2) complex forms which resolves the HJ.

The protein localises to the cytoplasm. In terms of biological role, the RuvA-RuvB-RuvC complex processes Holliday junction (HJ) DNA during genetic recombination and DNA repair, while the RuvA-RuvB complex plays an important role in the rescue of blocked DNA replication forks via replication fork reversal (RFR). RuvA specifically binds to HJ cruciform DNA, conferring on it an open structure. The RuvB hexamer acts as an ATP-dependent pump, pulling dsDNA into and through the RuvAB complex. HJ branch migration allows RuvC to scan DNA until it finds its consensus sequence, where it cleaves and resolves the cruciform DNA. The sequence is that of Holliday junction branch migration complex subunit RuvA from Legionella pneumophila subsp. pneumophila (strain Philadelphia 1 / ATCC 33152 / DSM 7513).